A 542-amino-acid polypeptide reads, in one-letter code: Probable myosin-binding protein 6 (542 aa).

The first 21 residues, 1-21 (MYIQLLCFFLFLFLLLQATMS), serve as a signal peptide directing secretion. A helical membrane pass occupies residues 39–59 (FLIYTVLEWSLIVFLFIDGVI). The segment at 219 to 239 (SFLAPAPSPRVSHNKLSENES) is disordered. A GTD-binding domain is found at 300–398 (SILNQLKKEV…ELEAEFEVYR (99 aa)). Positions 419 to 480 (GNASAYDDCQ…DEEKGSESKE (62 aa)) are disordered. Residues 437-456 (AVSSSNQQENGENIDQNGQS) are compositionally biased toward polar residues. The segment covering 471–480 (DEEKGSESKE) has biased composition (basic and acidic residues).

It localises to the membrane. Probable membrane-anchored myosin receptors. The protein is Probable myosin-binding protein 6 of Arabidopsis thaliana (Mouse-ear cress).